Here is a 181-residue protein sequence, read N- to C-terminus: Translation initiation factor IF-3 (181 aa).

This sequence belongs to the IF-3 family. In terms of assembly, monomer.

It is found in the cytoplasm. Functionally, IF-3 binds to the 30S ribosomal subunit and shifts the equilibrium between 70S ribosomes and their 50S and 30S subunits in favor of the free subunits, thus enhancing the availability of 30S subunits on which protein synthesis initiation begins. The chain is Translation initiation factor IF-3 from Azotobacter vinelandii.